Here is a 231-residue protein sequence, read N- to C-terminus: 5'-methylthioadenosine/S-adenosylhomocysteine nucleosidase (231 aa).

Glutamate 13 (proton acceptor) is an active-site residue. Substrate is bound by residues glycine 79, methionine 154, and 175-176 (ME). Catalysis depends on aspartate 199, which acts as the Proton donor.

Belongs to the PNP/UDP phosphorylase family. MtnN subfamily.

The catalysed reaction is S-adenosyl-L-homocysteine + H2O = S-(5-deoxy-D-ribos-5-yl)-L-homocysteine + adenine. It carries out the reaction S-methyl-5'-thioadenosine + H2O = 5-(methylsulfanyl)-D-ribose + adenine. It catalyses the reaction 5'-deoxyadenosine + H2O = 5-deoxy-D-ribose + adenine. Its pathway is amino-acid biosynthesis; L-methionine biosynthesis via salvage pathway; S-methyl-5-thio-alpha-D-ribose 1-phosphate from S-methyl-5'-thioadenosine (hydrolase route): step 1/2. Functionally, catalyzes the irreversible cleavage of the glycosidic bond in both 5'-methylthioadenosine (MTA) and S-adenosylhomocysteine (SAH/AdoHcy) to adenine and the corresponding thioribose, 5'-methylthioribose and S-ribosylhomocysteine, respectively. Also cleaves 5'-deoxyadenosine, a toxic by-product of radical S-adenosylmethionine (SAM) enzymes, into 5-deoxyribose and adenine. The protein is 5'-methylthioadenosine/S-adenosylhomocysteine nucleosidase of Marinomonas sp. (strain MWYL1).